We begin with the raw amino-acid sequence, 309 residues long: Olfactory receptor 5H17 (309 aa).

Residues 1-28 (MEKKNETLWTEFVLTGLTCLPQWKPLLF) lie on the Extracellular side of the membrane. Asn-5 is a glycosylation site (N-linked (GlcNAc...) asparagine). The helical transmembrane segment at 29–49 (LVFLVIYFMTIVGNLGLITLI) threads the bilayer. Residues 50–56 (WNDPHLH) are Cytoplasmic-facing. A helical membrane pass occupies residues 57–77 (IPMYLFLSNLAFVDTWLSSTV). Residues 78-93 (TPRMLFNLLDKGKVIS) lie on the Extracellular side of the membrane. The chain crosses the membrane as a helical span at residues 94 to 114 (VAECKTQFFSFAISVTTECFL). Cys-97 and Cys-189 are oxidised to a cystine. The Cytoplasmic segment spans residues 115–144 (LAAMAYDRYAAICNPLLYPVIMTNRLCVRL). A helical membrane pass occupies residues 145–165 (LALSFIGGFLHAVIHESFLSR). Residues 166–198 (LTFCNSNIIYHFYCDVIPLLKISCTDPSLNYLI) lie on the Extracellular side of the membrane. A helical membrane pass occupies residues 199-219 (IFIFSGSIQVFTIMTVLISYT). Residues 220–239 (FVLFTILKKKSDKGIRKAFS) lie on the Cytoplasmic side of the membrane. A helical membrane pass occupies residues 240-260 (TCGAHLLSVSLYYGPLLFMYV). At 261–271 (HPASSEVDDQD) the chain is on the extracellular side. The chain crosses the membrane as a helical span at residues 272–292 (MILSLFYTVIIPVLNPIIYSL). Topologically, residues 293–309 (RNKQVIDSLKKMLKMMV) are cytoplasmic.

It belongs to the G-protein coupled receptor 1 family.

The protein localises to the cell membrane. Its function is as follows. Potential odorant receptor. This is Olfactory receptor 5H17 from Mus musculus (Mouse).